Reading from the N-terminus, the 145-residue chain is Probable transport accessory protein MmpS2 (145 aa).

The chain crosses the membrane as a helical span at residues 11 to 31; it reads MWLLLAIVVVAVVGGLGIYRL.

It belongs to the MmpS family.

It is found in the cell membrane. The chain is Probable transport accessory protein MmpS2 (mmpS2) from Mycobacterium bovis (strain ATCC BAA-935 / AF2122/97).